A 443-amino-acid polypeptide reads, in one-letter code: D(2) dopamine receptor (443 aa).

Topologically, residues 1–37 (MDPLNLSWYDDDPESRNWSRPFNGSEGKVGKPHYNYY) are extracellular. N-linked (GlcNAc...) asparagine glycans are attached at residues Asn5, Asn17, and Asn23. The helical transmembrane segment at 38 to 60 (AMLLTLLIFVIVFGNVLVCMAVS) threads the bilayer. The Cytoplasmic portion of the chain corresponds to 61-70 (REKALQTTTN). Residues 71 to 93 (YLIVSLAVADLLVATLVMPWVVY) form a helical membrane-spanning segment. Over 94–108 (LEVVGEWKFSRIHCD) the chain is Extracellular. An intrachain disulfide couples Cys107 to Cys182. A helical membrane pass occupies residues 109-130 (IFVTLDVMMCTASILNLCAISI). The Cytoplasmic portion of the chain corresponds to 131-151 (DRYTAVAMPMLYNTRYSSKRR). Residues 152-172 (VTVMIAIVWVLSFTISCPLLF) traverse the membrane as a helical segment. The Extracellular portion of the chain corresponds to 173 to 188 (GLNNTDQNECIIANPA). The chain crosses the membrane as a helical span at residues 189-213 (FVVYSSVVSFYVPFIVTLLVYIKIY). The tract at residues 211–373 (KIYIVLRRRR…SQQKEKKATQ (163 aa)) is interaction with PPP1R9B. Over 214-373 (IVLRRRRKRV…SQQKEKKATQ (160 aa)) the chain is Cytoplasmic. A disordered region spans residues 282–331 (EMLSSTSPPERTRYSPIPPSHHQLTLPDPSHHGLHSTANSPVKPEKNGHA). Residues 374–395 (MLAIVLGVFIICWLPFFITHIL) form a helical membrane-spanning segment. The Extracellular segment spans residues 396–409 (NIHCDCNIPPVLYS). A disulfide bond links Cys399 and Cys401. The helical transmembrane segment at 410-431 (AFTWLGYVNSAVNPIIYTTFNV) threads the bilayer. Residues 432–443 (EFRKAFMKILHC) are Cytoplasmic-facing. The S-palmitoyl cysteine moiety is linked to residue Cys443.

Belongs to the G-protein coupled receptor 1 family. In terms of assembly, forms homo- and heterooligomers with DRD4. The interaction with DRD4 may modulate agonist-induced downstream signaling. Interacts with CADPS and CADPS2. Interacts with GPRASP1, PPP1R9B and CLIC6. Interacts with ARRB2. Interacts with HTR2A. Interacts with DRD1. Interacts with KCNA2. In terms of processing, palmitoylated. Palmitoylation which is required for proper localization to the plasma membrane and stability of the receptor could be carried on by ZDHHC4, ZDHHC3 and ZDHHC8.

It is found in the cell membrane. Its subcellular location is the golgi apparatus membrane. Functionally, dopamine receptor whose activity is mediated by G proteins which inhibit adenylyl cyclase. Positively regulates postnatal regression of retinal hyaloid vessels via suppression of VEGFR2/KDR activity, downstream of OPN5. In Mustela putorius furo (European domestic ferret), this protein is D(2) dopamine receptor (DRD2).